We begin with the raw amino-acid sequence, 162 residues long: Phosphopantetheine adenylyltransferase (162 aa).

Position 9 (S9) interacts with substrate. Residues 9–10 (SF) and H17 contribute to the ATP site. Residues K41, T73, and R87 each coordinate substrate. ATP contacts are provided by residues 88 to 90 (GLR), E98, and 122 to 128 (NQNISSS).

Belongs to the bacterial CoaD family. Homohexamer. Requires Mg(2+) as cofactor.

The protein resides in the cytoplasm. The catalysed reaction is (R)-4'-phosphopantetheine + ATP + H(+) = 3'-dephospho-CoA + diphosphate. The protein operates within cofactor biosynthesis; coenzyme A biosynthesis; CoA from (R)-pantothenate: step 4/5. Its function is as follows. Reversibly transfers an adenylyl group from ATP to 4'-phosphopantetheine, yielding dephospho-CoA (dPCoA) and pyrophosphate. In Leuconostoc mesenteroides subsp. mesenteroides (strain ATCC 8293 / DSM 20343 / BCRC 11652 / CCM 1803 / JCM 6124 / NCDO 523 / NBRC 100496 / NCIMB 8023 / NCTC 12954 / NRRL B-1118 / 37Y), this protein is Phosphopantetheine adenylyltransferase.